A 214-amino-acid polypeptide reads, in one-letter code: pH-sensitive calcium channel (214 aa).

The Cytoplasmic segment spans residues 1 to 15; it reads MQATVHESKQSIMQR. Residues 16–37 traverse the membrane as a helical segment; it reads ILTVFVFTLLIATVGLFIGQFV. Residues 38-44 are Extracellular-facing; it reads PVALMLP. The helical transmembrane segment at 45–59 threads the bilayer; the sequence is LSILEVAMIILAFWM. Residues 60–66 lie on the Cytoplasmic side of the membrane; the sequence is RRRKAVG. The chain crosses the membrane as a helical span at residues 67 to 86; the sequence is YAFVYTFAFVSGITLFPIVS. The Extracellular segment spans residues 87–95; it reads HYASIAGAY. A helical transmembrane segment spans residues 96–117; sequence VVLEAFGSTFVIFAVLGTIGAK. Topologically, residues 118 to 122 are cytoplasmic; it reads MKKDL. The helical transmembrane segment at 123-146 threads the bilayer; the sequence is SFLWSFLLVAVLALAVVGIFNIFS. At 147 to 151 the chain is on the extracellular side; it reads PLNSA. A helical membrane pass occupies residues 152–175; sequence AMMAYSVIGTIVFSLYILYDLNQI. Over 176-185 the chain is Cytoplasmic; sequence KHRHITEDLI. A helical membrane pass occupies residues 186–207; it reads PVMALSLYLDFINLFINLLRFF. The Extracellular portion of the chain corresponds to 208-214; the sequence is GILSSDD.

It belongs to the BI1 family. As to quaternary structure, monomer.

It is found in the cell membrane. The catalysed reaction is Ca(2+)(in) = Ca(2+)(out). With respect to regulation, the calcium-release activity is mediated by two factors: pH and transmembrane ion gradient. It was proposed, based on an MD simulation, that the conserved aspartyl dyad (Asp-171-Asp-195) regulates Ca(2+) binding, pH sensing, and the channel pore opening and closing, and that protonation of Asp-171 probably weakens its interaction with Arg-60, facilitating the opening of the channel. Another study using nanodiscs suggests that Asp-171 is not a pH sensor regulating the pore dynamics; instead, it is only involved in the gating of calcium ions. When crystallized in detergents at different pH conditions, the transition between open and closed conformations is regulated by pH. Ca(2+) binding is inhibited by Na(+), K(+), Li(+), Yb(3+) and Lu(3+), but not by Mg(2+) and Mn(2+). Functionally, calcium channel that probably plays a role in the regulation of calcium homeostasis. Uptakes calcium ions and mediates calcium flux in proteoliposomes in a pH-dependent manner. When expressed in E.coli in the presence of high extracellular calcium concentrations, shows calcium-leak activity, increasing intracellular calcium concentration. It can also mediate Ca(2+) flux from the endoplamic reticulum (ER) when expressed in permeabilized mammalian cells. Calcium transport activity is also detected in ER-like lipid vesicles. This is pH-sensitive calcium channel from Bacillus subtilis (strain 168).